The primary structure comprises 779 residues: MIDSSSNNTYDVNESLKVENLTRDDYEEICKRLGRKPNRTELGMFGVMWSEHCCYRNSKPLLANFPTTGKNVLVGPGENAGVIDVGNDQKLVFKIESHNHPSAIEPFQGAATGVGGILRDIFTMGARPIAVLNSLRFGNLDKLSNISLLRGVVSGISHYGNCVGVPTVGGEIDFDDSYSGNPLVNVMALGLLETDEIVCSGAKEVGSPVLYVGNTTGKDGVGGASFASSELNTNSLDNRPAVQVGDPFIEKSLIEACLDAFKTGDVLSAQDMGAAGLTCSSAEMAANGSLGISINLDLVPARENDMSAYQYLLSESQERMLLVVKEEKLNTLINQFKKWGLFANVIGEVISRKEVIISQKNQIVAQIPTSALSDETPINIHNIIKEPPIHLLEKWEWTEEELPAISENKILSLKDQQKYSFSEIILKLLSNPSIASKSWVYRQYDSQVQSNTVFKPGDADAALIRLRRQDEKNKNNEFSGVAASVDCNSRWVLLDPYRGSIAAVAESARNVSCVGAQPIAITNNLNFSSPETEIGYWQLSSACDGISKACIALETPVTGGNVSLYNESKNQNNQVTPINPTPVIGMVGTIKNVDKAISSGWKNINDQIWIIGSNASESSIAASSYLEYFHDLVTGRPPKIHLQDEKYCQSFLRDSIQKNYIASSHDVSDGGLAVALSECCILSSKGAYIQLEEKNARQDNLLFSEGGSRILFSVNKKEEQNFLNFLEIKSKDFGRNVYVKKIGFVSEHNLDITLQDQTLCNLRVDELTEKFNNSISNCF.

Residue H52 is part of the active site. ATP is bound by residues Y55 and K94. E96 contributes to the Mg(2+) binding site. Substrate is bound by residues 97–100 and R119; that span reads SHNH. Residue H98 is the Proton acceptor of the active site. D120 lines the Mg(2+) pocket. Q243 is a substrate binding site. D271 is a Mg(2+) binding site. 315 to 317 is a substrate binding site; the sequence is ESQ. Residues N523 and G560 each coordinate ATP. N561 contacts Mg(2+). S563 is a binding site for substrate.

The protein belongs to the FGAMS family. Monomer. Part of the FGAM synthase complex composed of 1 PurL, 1 PurQ and 2 PurS subunits.

Its subcellular location is the cytoplasm. The enzyme catalyses N(2)-formyl-N(1)-(5-phospho-beta-D-ribosyl)glycinamide + L-glutamine + ATP + H2O = 2-formamido-N(1)-(5-O-phospho-beta-D-ribosyl)acetamidine + L-glutamate + ADP + phosphate + H(+). It participates in purine metabolism; IMP biosynthesis via de novo pathway; 5-amino-1-(5-phospho-D-ribosyl)imidazole from N(2)-formyl-N(1)-(5-phospho-D-ribosyl)glycinamide: step 1/2. Functionally, part of the phosphoribosylformylglycinamidine synthase complex involved in the purines biosynthetic pathway. Catalyzes the ATP-dependent conversion of formylglycinamide ribonucleotide (FGAR) and glutamine to yield formylglycinamidine ribonucleotide (FGAM) and glutamate. The FGAM synthase complex is composed of three subunits. PurQ produces an ammonia molecule by converting glutamine to glutamate. PurL transfers the ammonia molecule to FGAR to form FGAM in an ATP-dependent manner. PurS interacts with PurQ and PurL and is thought to assist in the transfer of the ammonia molecule from PurQ to PurL. The polypeptide is Phosphoribosylformylglycinamidine synthase subunit PurL (Prochlorococcus marinus subsp. pastoris (strain CCMP1986 / NIES-2087 / MED4)).